The following is an 88-amino-acid chain: Protein MATERNALLY EXPRESSED GENE 1 (88 aa).

The N-terminal stretch at 1-27 (MEYKKRVDALVFFSLLLLGYFAAHAHG) is a signal peptide. Residue N36 is glycosylated (N-linked (GlcNAc...) asparagine). Intrachain disulfides connect C65/C87 and C68/C76.

Belongs to the MEG family. Glycosylated. In terms of tissue distribution, expressed exclusively in endosperm. Found in basal endosperm transfer cells.

The protein localises to the secreted. The protein resides in the cell wall. Its subcellular location is the cell membrane. It localises to the extracellular space. It is found in the extracellular matrix. Its function is as follows. Regulates maternal nutrient uptake, sucrose partitioning, and seed biomass yield. Necessary and sufficient for the establishment and differentiation of the endosperm nutrient transfer cells located at the mother:seed interface. Exclusive expression of the maternal allele at the early stages of endosperm development. The maternal allele is hypomethylated. At later stages, expression becomes biallelic. Regulated by the transcription factor MRP1. The protein is Protein MATERNALLY EXPRESSED GENE 1 (MEG1) of Zea mays (Maize).